A 264-amino-acid chain; its full sequence is Glutamate racemase (264 aa).

Substrate contacts are provided by residues 10-11 (DS) and 42-43 (YG). Cys-73 functions as the Proton donor/acceptor in the catalytic mechanism. 74–75 (NT) contacts substrate. Cys-183 serves as the catalytic Proton donor/acceptor. Residue 184-185 (TH) coordinates substrate.

It belongs to the aspartate/glutamate racemases family.

It carries out the reaction L-glutamate = D-glutamate. It participates in cell wall biogenesis; peptidoglycan biosynthesis. Provides the (R)-glutamate required for cell wall biosynthesis. The chain is Glutamate racemase from Streptococcus equi subsp. zooepidemicus (strain H70).